A 129-amino-acid chain; its full sequence is Small ribosomal subunit protein uS11 (129 aa).

Belongs to the universal ribosomal protein uS11 family. In terms of assembly, part of the 30S ribosomal subunit. Interacts with proteins S7 and S18. Binds to IF-3.

Located on the platform of the 30S subunit, it bridges several disparate RNA helices of the 16S rRNA. Forms part of the Shine-Dalgarno cleft in the 70S ribosome. The polypeptide is Small ribosomal subunit protein uS11 (Carboxydothermus hydrogenoformans (strain ATCC BAA-161 / DSM 6008 / Z-2901)).